The primary structure comprises 459 residues: UDP-glycosyltransferase 78D3 (459 aa).

UDP-alpha-D-glucose is bound by residues 338 to 340 (APQ), 355 to 363 (HGGWNSVLE), and 377 to 380 (FGDH).

This sequence belongs to the UDP-glycosyltransferase family.

In terms of biological role, possesses low quercetin 3-O-glucosyltransferase activity in vitro. The chain is UDP-glycosyltransferase 78D3 (UGT78D3) from Arabidopsis thaliana (Mouse-ear cress).